The chain runs to 136 residues: Large ribosomal subunit protein uL16 (136 aa).

It belongs to the universal ribosomal protein uL16 family. As to quaternary structure, part of the 50S ribosomal subunit.

In terms of biological role, binds 23S rRNA and is also seen to make contacts with the A and possibly P site tRNAs. This is Large ribosomal subunit protein uL16 from Buchnera aphidicola subsp. Acyrthosiphon pisum (strain 5A).